A 514-amino-acid chain; its full sequence is 3-octaprenyl-4-hydroxybenzoate carboxy-lyase (514 aa).

Asn-177 contacts Mn(2+). Prenylated FMN is bound by residues 180 to 182 (IYR), 194 to 196 (RWL), and 199 to 200 (RG). Residue Glu-243 coordinates Mn(2+). The Proton donor role is filled by Asp-314.

It belongs to the UbiD family. In terms of assembly, homohexamer. Requires prenylated FMN as cofactor. Mn(2+) is required as a cofactor.

The protein localises to the cell membrane. The catalysed reaction is a 4-hydroxy-3-(all-trans-polyprenyl)benzoate + H(+) = a 2-(all-trans-polyprenyl)phenol + CO2. It participates in cofactor biosynthesis; ubiquinone biosynthesis. In terms of biological role, catalyzes the decarboxylation of 3-octaprenyl-4-hydroxy benzoate to 2-octaprenylphenol, an intermediate step in ubiquinone biosynthesis. This Bordetella petrii (strain ATCC BAA-461 / DSM 12804 / CCUG 43448) protein is 3-octaprenyl-4-hydroxybenzoate carboxy-lyase.